Reading from the N-terminus, the 118-residue chain is UPF0212 protein HQ_2663A (118 aa).

Belongs to the UPF0212 family.

This Haloquadratum walsbyi (strain DSM 16790 / HBSQ001) protein is UPF0212 protein HQ_2663A.